Reading from the N-terminus, the 142-residue chain is Large ribosomal subunit protein uL11 (142 aa).

This sequence belongs to the universal ribosomal protein uL11 family. In terms of assembly, part of the ribosomal stalk of the 50S ribosomal subunit. Interacts with L10 and the large rRNA to form the base of the stalk. L10 forms an elongated spine to which L12 dimers bind in a sequential fashion forming a multimeric L10(L12)X complex. One or more lysine residues are methylated.

Functionally, forms part of the ribosomal stalk which helps the ribosome interact with GTP-bound translation factors. This is Large ribosomal subunit protein uL11 from Brucella abortus (strain S19).